Consider the following 547-residue polypeptide: Glucose-6-phosphate isomerase (547 aa).

E351 acts as the Proton donor in catalysis. Active-site residues include H382 and K511.

Belongs to the GPI family.

The protein localises to the cytoplasm. The enzyme catalyses alpha-D-glucose 6-phosphate = beta-D-fructose 6-phosphate. Its pathway is carbohydrate biosynthesis; gluconeogenesis. The protein operates within carbohydrate degradation; glycolysis; D-glyceraldehyde 3-phosphate and glycerone phosphate from D-glucose: step 2/4. Functionally, catalyzes the reversible isomerization of glucose-6-phosphate to fructose-6-phosphate. This chain is Glucose-6-phosphate isomerase, found in Xanthobacter autotrophicus (strain ATCC BAA-1158 / Py2).